The following is a 166-amino-acid chain: Cold-inducible RNA-binding protein (166 aa).

The 79-residue stretch at 6 to 84 (GKLFVGGLNF…RQIRVDQAGK (79 aa)) folds into the RRM domain. Residues 68–166 (NGKSVDGRQI…DSYDSYTTQE (99 aa)) form a disordered region. A compositionally biased stretch (gly residues) spans 93 to 120 (YRGGSSGGRGFFRGGRGRGGGGDRGYGG). The span at 121-166 (SSRFENRSGGYQSSGSRDYYGRSHGSYGDRSGGSYRDSYDSYTTQE) shows a compositional bias: low complexity.

As to quaternary structure, interacts with prmt1. Interacts with elavl1/elrA (via RRM3). Associates with ribosomes. In terms of processing, methylated on arginine residues within RGG motifs. Methylation by prmt1 promotes cytoplasmic accumulation.

The protein localises to the nucleus. The protein resides in the nucleoplasm. Its subcellular location is the cytoplasm. In terms of biological role, cold-inducible mRNA binding protein. Acts cooperatively with elavl1/elrA to stabilize AU-rich element (ARE)-containing mRNAs by binding to themm and inhibiting their deadenylation. Essential for embryonic gastrulation and neural development, acting to maintain the expression of a set of adhesion molecules, and cell movement during embryogenesis. Required for pronephros development. This is Cold-inducible RNA-binding protein from Xenopus tropicalis (Western clawed frog).